The following is a 453-amino-acid chain: Bifunctional protein GlmU (453 aa).

Positions 1-231 (MERTCLAVIL…EIEMTGCNNR (231 aa)) are pyrophosphorylase. UDP-N-acetyl-alpha-D-glucosamine contacts are provided by residues 10–13 (LAAG), Lys-24, Gln-77, 82–83 (GT), 105–107 (YGD), Gly-143, Glu-157, Asn-172, and Asn-229. Asp-107 contributes to the Mg(2+) binding site. Asn-229 provides a ligand contact to Mg(2+). Residues 232–252 (AELAVIERFWQERRRREMMLA) are linker. The interval 253–453 (GVTMIAPETV…AIKAAKRAKA (201 aa)) is N-acetyltransferase. Residues Arg-318 and Lys-336 each contribute to the UDP-N-acetyl-alpha-D-glucosamine site. The active-site Proton acceptor is the His-348. UDP-N-acetyl-alpha-D-glucosamine contacts are provided by Tyr-351 and Asn-362. Acetyl-CoA is bound by residues Ala-365, 371–372 (NY), Ser-390, Ser-408, and Arg-425.

The protein in the N-terminal section; belongs to the N-acetylglucosamine-1-phosphate uridyltransferase family. It in the C-terminal section; belongs to the transferase hexapeptide repeat family. As to quaternary structure, homotrimer. The cofactor is Mg(2+).

It is found in the cytoplasm. The enzyme catalyses alpha-D-glucosamine 1-phosphate + acetyl-CoA = N-acetyl-alpha-D-glucosamine 1-phosphate + CoA + H(+). It carries out the reaction N-acetyl-alpha-D-glucosamine 1-phosphate + UTP + H(+) = UDP-N-acetyl-alpha-D-glucosamine + diphosphate. The protein operates within nucleotide-sugar biosynthesis; UDP-N-acetyl-alpha-D-glucosamine biosynthesis; N-acetyl-alpha-D-glucosamine 1-phosphate from alpha-D-glucosamine 6-phosphate (route II): step 2/2. It functions in the pathway nucleotide-sugar biosynthesis; UDP-N-acetyl-alpha-D-glucosamine biosynthesis; UDP-N-acetyl-alpha-D-glucosamine from N-acetyl-alpha-D-glucosamine 1-phosphate: step 1/1. It participates in bacterial outer membrane biogenesis; LPS lipid A biosynthesis. In terms of biological role, catalyzes the last two sequential reactions in the de novo biosynthetic pathway for UDP-N-acetylglucosamine (UDP-GlcNAc). The C-terminal domain catalyzes the transfer of acetyl group from acetyl coenzyme A to glucosamine-1-phosphate (GlcN-1-P) to produce N-acetylglucosamine-1-phosphate (GlcNAc-1-P), which is converted into UDP-GlcNAc by the transfer of uridine 5-monophosphate (from uridine 5-triphosphate), a reaction catalyzed by the N-terminal domain. The protein is Bifunctional protein GlmU of Rhizobium etli (strain CIAT 652).